We begin with the raw amino-acid sequence, 180 residues long: Ribulose bisphosphate carboxylase small subunit, chloroplastic 1 (180 aa).

The N-terminal 56 residues, 1–56, are a transit peptide targeting the chloroplast; the sequence is MASSVISSAAVATRTNVAQASMVAPFNGLKSAVSFPVSSKQNLDITSIASNGGRVQ.

It belongs to the RuBisCO small chain family. As to quaternary structure, heterohexadecamer of 8 large and 8 small subunits.

It is found in the plastid. The protein localises to the chloroplast. Its function is as follows. RuBisCO catalyzes two reactions: the carboxylation of D-ribulose 1,5-bisphosphate, the primary event in carbon dioxide fixation, as well as the oxidative fragmentation of the pentose substrate. Both reactions occur simultaneously and in competition at the same active site. Although the small subunit is not catalytic it is essential for maximal activity. The sequence is that of Ribulose bisphosphate carboxylase small subunit, chloroplastic 1 from Petunia hybrida (Petunia).